We begin with the raw amino-acid sequence, 203 residues long: Outer-membrane lipoprotein carrier protein (203 aa).

A signal peptide spans 1-21 (MKKMAIACALLSSVVASSVWA). The interval 178–203 (QQNGAVDPSKFTFTPPQGVTIDDQRK) is disordered.

It belongs to the LolA family. Monomer.

Its subcellular location is the periplasm. Participates in the translocation of lipoproteins from the inner membrane to the outer membrane. Only forms a complex with a lipoprotein if the residue after the N-terminal Cys is not an aspartate (The Asp acts as a targeting signal to indicate that the lipoprotein should stay in the inner membrane). This chain is Outer-membrane lipoprotein carrier protein, found in Salmonella paratyphi A (strain ATCC 9150 / SARB42).